Consider the following 201-residue polypeptide: Syndecan-2 (201 aa).

Positions 1–18 (MQRAWILLTLGLMACVSA) are cleaved as a signal peptide. Residues 19–144 (ETRAELTSDK…HSDNLFKRTE (126 aa)) lie on the Extracellular side of the membrane. Residues serine 41, serine 55, and serine 57 are each glycosylated (O-linked (Xyl...) (glycosaminoglycan) serine). 2 disordered regions span residues 42–69 (GLYP…PDLT) and 88–129 (TMTL…KSTD). Residues 90–102 (TLKTQSITPTQTE) are compositionally biased toward polar residues. Positions 106-123 (ETDKKEFEISEAEEKQDP) are enriched in basic and acidic residues. Serine 115 bears the Phosphoserine mark. The chain crosses the membrane as a helical span at residues 145 to 169 (VLAAVIAGGVIGFLFAIFLILLLVY). The Cytoplasmic portion of the chain corresponds to 170-201 (RMRKKDEGSYDLGERKPSSAAYQKAPTKEFYA). Residues 178–201 (SYDLGERKPSSAAYQKAPTKEFYA) form a disordered region. A Phosphoserine modification is found at serine 187.

This sequence belongs to the syndecan proteoglycan family. As to quaternary structure, interacts (via cytoplasmic domain) with SARM1. Forms a complex with SDCBP and PDCD6IP. Post-translationally, O-glycosylated; contains both heparan sulfate and chondroitin sulfate.

The protein resides in the membrane. Functionally, cell surface proteoglycan which regulates dendritic arbor morphogenesis. The chain is Syndecan-2 (Sdc2) from Rattus norvegicus (Rat).